Reading from the N-terminus, the 180-residue chain is Trafficking protein particle complex subunit 3 (180 aa).

Cys68 carries S-palmitoyl cysteine lipidation.

This sequence belongs to the TRAPP small subunits family. BET3 subfamily. Homodimer. Component of the multisubunit transport protein particle (TRAPP) complex, which includes at least TRAPPC2, TRAPPC2L, TRAPPC3, TRAPPC3L, TRAPPC4, TRAPPC5, TRAPPC8, TRAPPC9, TRAPPC10, TRAPPC11 and TRAPPC12. Heterodimer with TRAPPC6A. The heterodimer TRAPPC3-TRAPPC6A interacts with TRAPPC2L. Heterodimer with TRAPPC6b. The heterodimer TRAPPC6B-TRAPPC3 interacts with TRAPPC1 likely providing a core for TRAPP complex formation. Widely expressed. Expressed in lung, heart, liver, spleen, brain and kidney.

The protein resides in the golgi apparatus. It localises to the cis-Golgi network. It is found in the endoplasmic reticulum. In terms of biological role, may play a role in vesicular transport from endoplasmic reticulum to Golgi. The protein is Trafficking protein particle complex subunit 3 of Mus musculus (Mouse).